We begin with the raw amino-acid sequence, 468 residues long: Monogalactosyldiacylglycerol synthase 2, chloroplastic (468 aa).

UDP is bound by residues H82, R251, 361–365 (GTIAE), and E383.

Belongs to the glycosyltransferase 28 family. As to expression, expressed mainly in floral buds. Detected in roots, leaves, stems, siliques and pollen tubes.

The protein localises to the plastid. The protein resides in the chloroplast outer membrane. It carries out the reaction a 1,2-diacyl-sn-glycerol + UDP-alpha-D-galactose = a 1,2-diacyl-3-O-(beta-D-galactosyl)-sn-glycerol + UDP + H(+). The catalysed reaction is 1,2-di-(9Z,12Z-octadecadienoyl)-sn-glycerol + UDP-alpha-D-galactose = 1,2-di-(9Z,12Z-octadecadienoyl)-3-beta-D-galactosyl-sn-glycerol + UDP + H(+). It catalyses the reaction 1-(9Z-octadecenoyl)-2-hexadecanoyl-sn-glycerol + UDP-alpha-D-galactose = 1-(9Z-octadecenoyl)-2-hexadecanoyl-3-beta-D-galactosyl-sn-glycerol + UDP + H(+). The enzyme catalyses 1,2-di-(9Z-octadecenoyl)-sn-glycerol + UDP-alpha-D-galactose = 1,2-di-(9Z-octadecenoyl)-3-beta-D-galactosyl-sn-glycerol + UDP + H(+). Inhibited by galvestine-1. Involved in the synthesis of monogalactosyldiacylglycerol, the major structural component of photosynthetic membranes and in the chloroplast envelope biogenesis. Can use both prokaryotic (18:1/16:0) or eukaryotic (18:2/18:2) 1,2-diacylglycerol species, but operates with some preference for the eukaryotic one. Plays a minor role in galactolipid synthesis in chloroplasts. Is required for membrane lipid remodeling in phosphate-starved roots. Acts as the minor factor involved in digalactosyldiacylglycerol (DGDG) biosynthesis in phosphate-starved roots. Does not seem to be required for plant growth under nutrient-sufficient conditions. Required for membrane lipid remodeling in plants grown in acidic conditions. This is Monogalactosyldiacylglycerol synthase 2, chloroplastic from Arabidopsis thaliana (Mouse-ear cress).